Consider the following 56-residue polypeptide: uncharacterized protein (56 aa).

This is an uncharacterized protein from Haemophilus influenzae (strain ATCC 51907 / DSM 11121 / KW20 / Rd).